A 52-amino-acid chain; its full sequence is UPF0391 membrane protein XOO4217 (52 aa).

2 consecutive transmembrane segments (helical) span residues 5-25 and 27-47; these read AMIFFVIAIIAAVLGFSGIAG and ATNIAWILFVVFLILAVISMF.

Belongs to the UPF0391 family.

The protein localises to the cell membrane. This is UPF0391 membrane protein XOO4217 from Xanthomonas oryzae pv. oryzae (strain KACC10331 / KXO85).